The primary structure comprises 384 residues: 1-deoxy-D-xylulose 5-phosphate reductoisomerase (384 aa).

Positions 10, 11, 12, 13, 36, 38, and 122 each coordinate NADPH. K123 is a 1-deoxy-D-xylulose 5-phosphate binding site. E124 lines the NADPH pocket. D148 contributes to the Mn(2+) binding site. Positions 149, 150, 174, and 197 each coordinate 1-deoxy-D-xylulose 5-phosphate. E150 serves as a coordination point for Mn(2+). G203 is a binding site for NADPH. S210, N215, K216, and E219 together coordinate 1-deoxy-D-xylulose 5-phosphate. Position 219 (E219) interacts with Mn(2+).

The protein belongs to the DXR family. Requires Mg(2+) as cofactor. The cofactor is Mn(2+).

It catalyses the reaction 2-C-methyl-D-erythritol 4-phosphate + NADP(+) = 1-deoxy-D-xylulose 5-phosphate + NADPH + H(+). The protein operates within isoprenoid biosynthesis; isopentenyl diphosphate biosynthesis via DXP pathway; isopentenyl diphosphate from 1-deoxy-D-xylulose 5-phosphate: step 1/6. Catalyzes the NADPH-dependent rearrangement and reduction of 1-deoxy-D-xylulose-5-phosphate (DXP) to 2-C-methyl-D-erythritol 4-phosphate (MEP). The polypeptide is 1-deoxy-D-xylulose 5-phosphate reductoisomerase (Geotalea daltonii (strain DSM 22248 / JCM 15807 / FRC-32) (Geobacter daltonii)).